A 114-amino-acid chain; its full sequence is Probable acid stress chaperone HdeA (114 aa).

Positions 1-26 are cleaved as a signal peptide; sequence MIKALFNKNTALAAVAILALSGGAMA. Cysteines 46 and 94 form a disulfide.

This sequence belongs to the HdeA family.

The protein resides in the periplasm. Required for optimal acid stress protection. Exhibits a chaperone-like activity only at low pH by suppressing non-specifically the aggregation of denaturated periplasmic proteins. Contributes to acid resistance. Not required for wild-type virulence in the BALB/c mouse model. This Brucella abortus (strain 2308) protein is Probable acid stress chaperone HdeA.